The sequence spans 440 residues: Transposon Ty1-OL Gag polyprotein (440 aa).

Polar residues-rich tracts occupy residues 1-23, 48-60, and 127-152; these read MESQ…SVTS, TKAN…TPAS, and QSQF…GNTF. 3 disordered regions span residues 1–93, 126–173, and 352–440; these read MESQ…MMTQ, PQSQ…RPPP, and GSRN…PGTY. A compositionally biased stretch (low complexity) spans 153 to 165; the sequence is TDSSSADSDMTST. Residues 299-401 form an RNA-binding region; that stretch reads NNGIHINNKV…NSKSKTARAH (103 aa). Residues 402–418 show a composition bias toward low complexity; the sequence is NVSTSNNSPSTDNDSIS. Serine 416 bears the Phosphoserine mark. Polar residues predominate over residues 419 to 428; it reads KSTTEPIQLN. The segment covering 429-440 has biased composition (basic and acidic residues); it reads NKHDLHLRPGTY.

In terms of assembly, homotrimer.

The protein resides in the cytoplasm. Its function is as follows. Capsid protein (CA) is the structural component of the virus-like particle (VLP), forming the shell that encapsulates the retrotransposons dimeric RNA genome. The particles are assembled from trimer-clustered units and there are holes in the capsid shells that allow for the diffusion of macromolecules. CA also has nucleocapsid-like chaperone activity, promoting primer tRNA(i)-Met annealing to the multipartite primer-binding site (PBS), dimerization of Ty1 RNA and initiation of reverse transcription. This Saccharomyces cerevisiae (strain ATCC 204508 / S288c) (Baker's yeast) protein is Transposon Ty1-OL Gag polyprotein (TY1A-OL).